Here is a 117-residue protein sequence, read N- to C-terminus: Large ribosomal subunit protein uL18 (117 aa).

Belongs to the universal ribosomal protein uL18 family. In terms of assembly, part of the 50S ribosomal subunit; part of the 5S rRNA/L5/L18/L25 subcomplex. Contacts the 5S and 23S rRNAs.

Its function is as follows. This is one of the proteins that bind and probably mediate the attachment of the 5S RNA into the large ribosomal subunit, where it forms part of the central protuberance. This Francisella tularensis subsp. novicida (strain U112) protein is Large ribosomal subunit protein uL18.